Consider the following 209-residue polypeptide: Putative BTB/POZ domain-containing protein At2g40450 (209 aa).

The region spanning 24–98 is the BTB domain; the sequence is ADVRLKAGDS…IYRVDGSICS (75 aa).

It functions in the pathway protein modification; protein ubiquitination. Functionally, may act as a substrate-specific adapter of an E3 ubiquitin-protein ligase complex (CUL3-RBX1-BTB) which mediates the ubiquitination and subsequent proteasomal degradation of target proteins. The sequence is that of Putative BTB/POZ domain-containing protein At2g40450 from Arabidopsis thaliana (Mouse-ear cress).